The sequence spans 291 residues: Undecaprenyl-diphosphatase (291 aa).

A run of 8 helical transmembrane segments spans residues Met1–Phe21, Ser48–Phe68, Leu102–Ile122, Leu126–Ala146, Ile162–Phe182, Ser203–Leu223, Ile231–Ala251, and Phe267–Ile287.

The protein belongs to the UppP family.

The protein localises to the cell membrane. The catalysed reaction is di-trans,octa-cis-undecaprenyl diphosphate + H2O = di-trans,octa-cis-undecaprenyl phosphate + phosphate + H(+). Functionally, catalyzes the dephosphorylation of undecaprenyl diphosphate (UPP). Confers resistance to bacitracin. This chain is Undecaprenyl-diphosphatase, found in Staphylococcus aureus (strain COL).